The primary structure comprises 725 residues: MRLSDQVSPAGPDPSHDMNLDATSDPMNLDDFIVPFDSPAEHSAHPSVDRNFAATPTGSIPIKSRKDHAMTDSSTAASFPHPPQDQRTNSEFGYVPRRVRKTSVDERQFFAGLSVPTRKRPAEASPQVPPVSNAMMAHSSELSAALPDYSLDHHLLLLLFLAMAQWAPPTSSPSHAFQHSLRLDTYGINEDHGLNSAGPYQQNFHFSPSDSPMTAGNPFSSLYAQTPLASSLNSTEFFSPPPSGYQSTVSTPQPIYEGEQSIFFSDAPSAESHTQRRIPNYIQQRQSNLSASLQPRYMYNMSNGESHPGSAVTGPPTTNMSGFSVPQHVNPSQVLGHGEFSTTAPASSMFTFGGDSDNEDDDGNFGERGGITMPNDFASLDESVDMSAGLHWDGGFPGSVQSLPGFSAQTRKHVTIGSTDMIDGPLEWNQGGTLGRAHGSAASVSEVRNQNQDPRRYGKVPRTASTPNAAALLRQSLNGSASGLPTNHPSPSTLPESGLSSRCLPARQPGGLKNGSTNAGPEPACTNCFTQTTPLWRRNPEGQPLCNACGLFLKLHGVVRPLSLKTDVIKKRNRSSANTLTVGTSRSSKKSSRKNSIQHAPSTSISSRMNTSESPPSINGSSTLGKPGVVPIAAAPPKSGPPAGVAQARAGVQVAPRRQRRLEKAPAGSEPDADDSPKSAAPPSRSKVVPLAPAMAPPAAANPANHSIAGGQGASQEWEWLTMSL.

3 disordered regions span residues 1 to 90, 429 to 464, and 479 to 524; these read MRLS…RTNS, NQGGTLGRAHGSAASVSEVRNQNQDPRRYGKVPRTA, and GSAS…PEPA. Over residues 39–48 the composition is skewed to basic and acidic residues; sequence PAEHSAHPSV. Composition is skewed to polar residues over residues 442–452 and 479–500; these read ASVSEVRNQNQ and GSASGLPTNHPSPSTLPESGLS. A GATA-type zinc finger spans residues 525 to 549; that stretch reads CTNCFTQTTPLWRRNPEGQPLCNAC. Positions 574–714 are disordered; it reads RSSANTLTVG…NHSIAGGQGA (141 aa). 2 stretches are compositionally biased toward polar residues: residues 575–584 and 597–624; these read SSANTLTVGT and IQHAPSTSISSRMNTSESPPSINGSSTL. Composition is skewed to low complexity over residues 631–656 and 678–704; these read PIAAAPPKSGPPAGVAQARAGVQVAP and KSAAPPSRSKVVPLAPAMAPPAAANPA.

The protein resides in the nucleus. In terms of biological role, major nitrogen regulatory protein. The protein is Nitrogen regulatory protein areA (AREA) of Penicillium chrysogenum (Penicillium notatum).